A 198-amino-acid polypeptide reads, in one-letter code: tRNA (pseudouridine(54)-N(1))-methyltransferase (198 aa).

Residues Leu130, Gly153, 176-181 (LSPLEL), and Cys186 each bind S-adenosyl-L-methionine.

This sequence belongs to the methyltransferase superfamily. TrmY family. In terms of assembly, homodimer.

The protein resides in the cytoplasm. It catalyses the reaction pseudouridine(54) in tRNA + S-adenosyl-L-methionine = N(1)-methylpseudouridine(54) in tRNA + S-adenosyl-L-homocysteine + H(+). Its function is as follows. Specifically catalyzes the N1-methylation of pseudouridine at position 54 (Psi54) in tRNAs. The chain is tRNA (pseudouridine(54)-N(1))-methyltransferase from Methanococcus maripaludis (strain C5 / ATCC BAA-1333).